We begin with the raw amino-acid sequence, 464 residues long: Glutamate--tRNA ligase 1 (464 aa).

A 'HIGH' region motif is present at residues 10–20; it reads PSPTGYLHIGG. The 'KMSKS' region motif lies at 238–242; it reads KLSKR. Lysine 241 is an ATP binding site.

This sequence belongs to the class-I aminoacyl-tRNA synthetase family. Glutamate--tRNA ligase type 1 subfamily. Monomer.

It is found in the cytoplasm. It carries out the reaction tRNA(Glu) + L-glutamate + ATP = L-glutamyl-tRNA(Glu) + AMP + diphosphate. Functionally, catalyzes the attachment of glutamate to tRNA(Glu) in a two-step reaction: glutamate is first activated by ATP to form Glu-AMP and then transferred to the acceptor end of tRNA(Glu). The polypeptide is Glutamate--tRNA ligase 1 (Helicobacter hepaticus (strain ATCC 51449 / 3B1)).